Reading from the N-terminus, the 97-residue chain is Co-chaperonin GroES (97 aa).

This sequence belongs to the GroES chaperonin family. In terms of assembly, heptamer of 7 subunits arranged in a ring. Interacts with the chaperonin GroEL.

It localises to the cytoplasm. Its function is as follows. Together with the chaperonin GroEL, plays an essential role in assisting protein folding. The GroEL-GroES system forms a nano-cage that allows encapsulation of the non-native substrate proteins and provides a physical environment optimized to promote and accelerate protein folding. GroES binds to the apical surface of the GroEL ring, thereby capping the opening of the GroEL channel. The polypeptide is Co-chaperonin GroES (Gemmatimonas aurantiaca (strain DSM 14586 / JCM 11422 / NBRC 100505 / T-27)).